The primary structure comprises 184 residues: RNA 2',3'-cyclic phosphodiesterase (184 aa).

His-42 serves as the catalytic Proton donor. Short sequence motifs (HXTX) lie at residues 42-45 (HFTL) and 127-130 (HLTV). The active-site Proton acceptor is His-127.

This sequence belongs to the 2H phosphoesterase superfamily. ThpR family.

The catalysed reaction is a 3'-end 2',3'-cyclophospho-ribonucleotide-RNA + H2O = a 3'-end 2'-phospho-ribonucleotide-RNA + H(+). Hydrolyzes RNA 2',3'-cyclic phosphodiester to an RNA 2'-phosphomonoester. This is RNA 2',3'-cyclic phosphodiesterase from Methanothermobacter thermautotrophicus (strain ATCC 29096 / DSM 1053 / JCM 10044 / NBRC 100330 / Delta H) (Methanobacterium thermoautotrophicum).